The sequence spans 736 residues: Subtilisin-like protease SBT4.12 (736 aa).

A signal peptide spans M1–A24. Positions I25–H110 are cleaved as a propeptide — activation peptide. An Inhibitor I9 domain is found at V32–H110. The region spanning S114–L580 is the Peptidase S8 domain. The active-site Charge relay system is D142. N173 carries N-linked (GlcNAc...) asparagine glycosylation. The Charge relay system role is filled by H197. N220, N381, and N459 each carry an N-linked (GlcNAc...) asparagine glycan. The PA domain maps to K353–L437. Residue S519 is the Charge relay system of the active site. N-linked (GlcNAc...) asparagine glycans are attached at residues N601, N649, and N659.

Belongs to the peptidase S8 family. The C-terminal propeptide is autocleaved. In terms of tissue distribution, specifically expressed in root stele of the root hair zone.

The protein resides in the secreted. In Arabidopsis thaliana (Mouse-ear cress), this protein is Subtilisin-like protease SBT4.12.